The chain runs to 93 residues: MTKSDLIERLSSSQQHLAAKDVEAAVREILECMAATLESGNRIEIRGFGSFSLHYRAPRVGRNPKTGEKVELLAKSVPHFKPGKELRERVNSL.

Belongs to the bacterial histone-like protein family. As to quaternary structure, heterodimer of an alpha and a beta chain.

Functionally, this protein is one of the two subunits of integration host factor, a specific DNA-binding protein that functions in genetic recombination as well as in transcriptional and translational control. This chain is Integration host factor subunit beta, found in Tolumonas auensis (strain DSM 9187 / NBRC 110442 / TA 4).